A 357-amino-acid polypeptide reads, in one-letter code: Vomeronasal type-1 receptor 5 (357 aa).

The Extracellular portion of the chain corresponds to Met-1–Lys-3. A helical membrane pass occupies residues Leu-4 to Ser-24. At Thr-25–Gln-52 the chain is on the cytoplasmic side. A helical membrane pass occupies residues Ala-53 to Phe-73. Residues Ser-74–Asp-81 are Extracellular-facing. The helical transmembrane segment at Met-82–Val-102 threads the bilayer. The Cytoplasmic portion of the chain corresponds to Ser-103–Gly-130. The helical transmembrane segment at Leu-131 to Phe-151 threads the bilayer. Topologically, residues Ser-152–His-163 are extracellular. Residues Ile-164–Cys-184 traverse the membrane as a helical segment. The Cytoplasmic segment spans residues Thr-185–Gln-269. A helical membrane pass occupies residues Ala-270–Ser-290. The Extracellular segment spans residues Gly-291–Leu-300. An N-linked (GlcNAc...) asparagine glycan is attached at Asn-297. The helical transmembrane segment at Leu-301 to Ile-321 threads the bilayer. The Cytoplasmic segment spans residues Tyr-322–Lys-357.

This sequence belongs to the G-protein coupled receptor 1 family.

Its subcellular location is the cell membrane. Functionally, putative pheromone receptor. The protein is Vomeronasal type-1 receptor 5 (VN1R5) of Homo sapiens (Human).